The primary structure comprises 37 residues: MIEVLLSGIVLGLIPITLAGLFVTAYLQYRRGDQLDI.

The chain crosses the membrane as a helical span at residues 5 to 25 (LLSGIVLGLIPITLAGLFVTA).

This sequence belongs to the PetG family. As to quaternary structure, the 4 large subunits of the cytochrome b6-f complex are cytochrome b6, subunit IV (17 kDa polypeptide, PetD), cytochrome f and the Rieske protein, while the 4 small subunits are PetG, PetL, PetM and PetN. The complex functions as a dimer.

The protein localises to the plastid. It localises to the chloroplast thylakoid membrane. Functionally, component of the cytochrome b6-f complex, which mediates electron transfer between photosystem II (PSII) and photosystem I (PSI), cyclic electron flow around PSI, and state transitions. PetG is required for either the stability or assembly of the cytochrome b6-f complex. The sequence is that of Cytochrome b6-f complex subunit 5 from Cryptomeria japonica (Japanese cedar).